A 363-amino-acid polypeptide reads, in one-letter code: Holliday junction branch migration complex subunit RuvB (363 aa).

Positions 1 to 32 (MAIQTDSFAAAPAPSSGSTRRLISAAPTSPNE) are disordered. Low complexity predominate over residues 7-18 (SFAAAPAPSSGS). The interval 13-200 (APSSGSTRRL…FGIVARLEFY (188 aa)) is large ATPase domain (RuvB-L). ATP contacts are provided by residues Leu39, Arg40, Gly81, Lys84, Thr85, Thr86, 147-149 (EDY), Arg190, Tyr200, and Arg237. Mg(2+) is bound at residue Thr85. The small ATPAse domain (RuvB-S) stretch occupies residues 201 to 271 (TPEELVRIVT…IAELALTMLD (71 aa)). Positions 274–363 (PRGFDVMDRK…GPVGSDLFEG (90 aa)) are head domain (RuvB-H). Residues Arg329 and Arg334 each coordinate DNA.

It belongs to the RuvB family. In terms of assembly, homohexamer. Forms an RuvA(8)-RuvB(12)-Holliday junction (HJ) complex. HJ DNA is sandwiched between 2 RuvA tetramers; dsDNA enters through RuvA and exits via RuvB. An RuvB hexamer assembles on each DNA strand where it exits the tetramer. Each RuvB hexamer is contacted by two RuvA subunits (via domain III) on 2 adjacent RuvB subunits; this complex drives branch migration. In the full resolvosome a probable DNA-RuvA(4)-RuvB(12)-RuvC(2) complex forms which resolves the HJ.

It is found in the cytoplasm. It carries out the reaction ATP + H2O = ADP + phosphate + H(+). The RuvA-RuvB-RuvC complex processes Holliday junction (HJ) DNA during genetic recombination and DNA repair, while the RuvA-RuvB complex plays an important role in the rescue of blocked DNA replication forks via replication fork reversal (RFR). RuvA specifically binds to HJ cruciform DNA, conferring on it an open structure. The RuvB hexamer acts as an ATP-dependent pump, pulling dsDNA into and through the RuvAB complex. RuvB forms 2 homohexamers on either side of HJ DNA bound by 1 or 2 RuvA tetramers; 4 subunits per hexamer contact DNA at a time. Coordinated motions by a converter formed by DNA-disengaged RuvB subunits stimulates ATP hydrolysis and nucleotide exchange. Immobilization of the converter enables RuvB to convert the ATP-contained energy into a lever motion, pulling 2 nucleotides of DNA out of the RuvA tetramer per ATP hydrolyzed, thus driving DNA branch migration. The RuvB motors rotate together with the DNA substrate, which together with the progressing nucleotide cycle form the mechanistic basis for DNA recombination by continuous HJ branch migration. Branch migration allows RuvC to scan DNA until it finds its consensus sequence, where it cleaves and resolves cruciform DNA. This is Holliday junction branch migration complex subunit RuvB from Leptothrix cholodnii (strain ATCC 51168 / LMG 8142 / SP-6) (Leptothrix discophora (strain SP-6)).